The sequence spans 507 residues: Myocyte-specific enhancer factor 2A (507 aa).

The MADS-box domain maps to 3 to 57 (RKKIQITRIMDERNRQVTFTKRKFGLMKKAYELSVLCDCEIALIIFNSSNKLFQY). K30 bears the Phosphoserine mark. A DNA-binding region (mef2-type) is located at residues 58-86 (ASTDMDKVLLKYTEYNEPHESRTNSDIVE). A Phosphoserine; by CK2 modification is found at S59. Residue S98 is modified to Phosphoserine. Residues 173-183 (TLTDSSMLSPP) are compositionally biased toward low complexity. The tract at residues 173 to 229 (TLTDSSMLSPPQTTLHRNVSPGAPQRPPSTGNAGGMLSTTDLTVPNGAGSSPVGNGF) is disordered. The segment covering 209–229 (LSTTDLTVPNGAGSSPVGNGF) has biased composition (polar residues). S235 bears the Phosphoserine mark. The segment at 243–270 (GANSLGKVMPTKSPPPPGGGNLGMNSRK) is disordered. K249 carries the N6-acetyllysine modification. Residue S255 is modified to Phosphoserine; by MAPK14. Positions 266 to 283 (MNSRKPDLRVVIPPSSKG) are required for interaction with MAPKs. A beta domain region spans residues 289 to 296 (SEEEELEL). Phosphothreonine; by MAPK7 and MAPK14 occurs at positions 312 and 319. At T312 the chain carries Phosphothreonine; by NLK. Residue S355 is modified to Phosphoserine; by MAPK7. Positions 397 to 507 (NQNISIKSEP…KRMRMDAWVT (111 aa)) are disordered. K403 carries the N6-acetyllysine; alternate modification. Residue K403 forms a Glycyl lysine isopeptide (Lys-Gly) (interchain with G-Cter in SUMO); alternate linkage. Position 408 is a phosphoserine; by CDK5 (S408). The residue at position 415 (T415) is a Phosphothreonine. Positions 420–429 (QQQQQQQQQQ) are enriched in low complexity. Residues 430–445 (QPPPPPQPQPQPPQPQ) are compositionally biased toward pro residues. Position 453 is a phosphoserine; by MAPK (S453). A compositionally biased stretch (low complexity) spans 453–466 (SPVDSLSSSSSSYD). Composition is skewed to basic and acidic residues over residues 467-477 (GSDREDPRGDF) and 488-507 (NTED…AWVT).

The protein belongs to the MEF2 family. As to quaternary structure, binds DNA as a homo- or heterodimer. Dimerizes with MEF2D. Interacts with HDAC7. Interacts with PIAS1; the interaction enhances sumoylation. Interacts with HDAC4, HDAC9 and SLC2A4RG. Interacts (via the N-terminal) with MAPK7; the interaction results in the phosphorylation and transcriptional activity of MEF2A. Post-translationally, constitutive phosphorylation on Ser-408 promotes Lys-403 sumoylation thus preventing acetylation at this site. Dephosphorylation on Ser-408 by PPP3CA upon neuron depolarization promotes a switch from sumoylation to acetylation on residue Lys-403 leading to inhibition of dendrite claw differentiation. Phosphorylation on Thr-312 and Thr-319 are the main sites involved in p38 MAPK signaling and activate transcription. Phosphorylated on these sites by MAPK14/p38alpha and MAPK11/p38beta, but not by MAPK13/p38delta nor by MAPK12/p38gamma. Phosphorylation on Ser-408 by CDK5 induced by neurotoxicity inhibits MEF2A transcriptional activation leading to apoptosis of cortical neurons. Phosphorylation on Thr-312, Thr-319 and Ser-355 can be induced by EGF. Sumoylation on Lys-403 is enhanced by PIAS1 and represses transcriptional activity. Phosphorylation on Ser-408 is required for sumoylation. Has no effect on nuclear location nor on DNA binding. Sumoylated with SUMO1 and, to a lesser extent with SUMO2 and SUMO3. PIASx facilitates sumoylation in postsynaptic dendrites in the cerebellar cortex and promotes their morphogenesis. In terms of processing, acetylation on Lys-403 activates transcriptional activity. Acetylated by p300 on several sites in diffentiating myocytes. Acetylation on Lys-4 increases DNA binding and transactivation. Hyperacetylation by p300 leads to enhanced cardiac myocyte growth and heart failure. Post-translationally, proteolytically cleaved in cerebellar granule neurons on several sites by caspase 3 and caspase 7 following neurotoxicity. Preferentially cleaves the CDK5-mediated hyperphosphorylated form which leads to neuron apoptosis and transcriptional inactivation. As to expression, isoform MEF2 and isoform MEFA are expressed only in skeletal and cardiac muscle and in the brain. Isoform RSRFC4 and isoform RSRFC9 are expressed in all tissues examined.

It localises to the nucleus. In terms of biological role, transcriptional activator which binds specifically to the MEF2 element, 5'-YTA[AT](4)TAR-3', found in numerous muscle-specific genes. Also involved in the activation of numerous growth factor- and stress-induced genes. Mediates cellular functions not only in skeletal and cardiac muscle development, but also in neuronal differentiation and survival. Plays diverse roles in the control of cell growth, survival and apoptosis via p38 MAPK signaling in muscle-specific and/or growth factor-related transcription. In cerebellar granule neurons, phosphorylated and sumoylated MEF2A represses transcription of NUR77 promoting synaptic differentiation. Associates with chromatin to the ZNF16 promoter. The sequence is that of Myocyte-specific enhancer factor 2A (MEF2A) from Homo sapiens (Human).